The sequence spans 251 residues: Carboxy-S-adenosyl-L-methionine synthase (251 aa).

S-adenosyl-L-methionine contacts are provided by residues tyrosine 48, 73–75, asparagine 140, and arginine 207; that span reads GCS.

The protein belongs to the class I-like SAM-binding methyltransferase superfamily. Cx-SAM synthase family. As to quaternary structure, homodimer.

It catalyses the reaction prephenate + S-adenosyl-L-methionine = carboxy-S-adenosyl-L-methionine + 3-phenylpyruvate + H2O. Its function is as follows. Catalyzes the conversion of S-adenosyl-L-methionine (SAM) to carboxy-S-adenosyl-L-methionine (Cx-SAM). This is Carboxy-S-adenosyl-L-methionine synthase from Hydrogenovibrio crunogenus (strain DSM 25203 / XCL-2) (Thiomicrospira crunogena).